We begin with the raw amino-acid sequence, 163 residues long: Probable chemoreceptor glutamine deamidase CheD (163 aa).

It belongs to the CheD family.

The enzyme catalyses L-glutaminyl-[protein] + H2O = L-glutamyl-[protein] + NH4(+). In terms of biological role, probably deamidates glutamine residues to glutamate on methyl-accepting chemotaxis receptors (MCPs), playing an important role in chemotaxis. This chain is Probable chemoreceptor glutamine deamidase CheD, found in Borreliella burgdorferi (strain ATCC 35210 / DSM 4680 / CIP 102532 / B31) (Borrelia burgdorferi).